We begin with the raw amino-acid sequence, 321 residues long: Phosphopantothenate--cysteine ligase 1 (321 aa).

Belongs to the PPC synthetase family. Homodimer.

It catalyses the reaction (R)-4'-phosphopantothenate + L-cysteine + CTP = N-[(R)-4-phosphopantothenoyl]-L-cysteine + CMP + diphosphate + H(+). Its pathway is cofactor biosynthesis; coenzyme A biosynthesis; CoA from (R)-pantothenate: step 2/5. Catalyzes the first step in the biosynthesis of coenzyme A from vitamin B5, where cysteine is conjugated to 4'-phosphopantothenate to form 4-phosphopantothenoylcysteine. The polypeptide is Phosphopantothenate--cysteine ligase 1 (Oryza sativa subsp. japonica (Rice)).